The following is a 442-amino-acid chain: CAAX prenyl protease 1 homolog (442 aa).

Over 1–62 the chain is Lumenal; it reads MDASCLFKAL…KARDYKIDNH (62 aa). A helical membrane pass occupies residues 63–83; that stretch reads LFGFFHSWFNQLLLTAQLIGG. A topological domain (cytoplasmic) is located at residue Tyr84. A helical membrane pass occupies residues 85–105; the sequence is YPFLWYATASYPLHVAVFLSI. Over 106–146 the chain is Lumenal; sequence NSIIETIIDLPWDLYSTFIIEDAHGFNKQTIGFYFVDKIKK. A helical transmembrane segment spans residues 147–167; it reads MLVGFALTMPIVYGIEWIIVN. The Cytoplasmic segment spans residues 168-170; the sequence is GGP. Residues 171–191 traverse the membrane as a helical segment; it reads YFFVYIWLFVSVVVLLLMTIY. Residues 192–311 are Lumenal-facing; the sequence is PTFIAPLFDK…ELGHWALWHT (120 aa). His301 is a Zn(2+) binding site. Residue Glu302 is part of the active site. His305 is a Zn(2+) binding site. A helical transmembrane segment spans residues 312-332; sequence LINLVITEVNLFFSFAVFGYF. Over 333-349 the chain is Cytoplasmic; it reads YKWEALYQGFGYHDTPP. A helical transmembrane segment spans residues 350–370; the sequence is VIGMMLIFQFVLALYNQLASI. The Lumenal segment spans residues 371–442; that stretch reads GMVIHSRSAE…AVRAFQAKNK (72 aa). Glu380 contributes to the Zn(2+) binding site. Asp384 acts as the Proton donor in catalysis.

Belongs to the peptidase M48A family. Requires Zn(2+) as cofactor.

The protein resides in the endoplasmic reticulum membrane. The protein localises to the membrane. The enzyme catalyses Hydrolyzes the peptide bond -P2-(S-farnesyl or geranylgeranyl)C-P1'-P2'-P3'-COOH where P1' and P2' are amino acids with aliphatic side chains and P3' is any C-terminal residue.. Proteolytically removes the C-terminal three residues of farnesylated proteins. The sequence is that of CAAX prenyl protease 1 homolog from Caenorhabditis elegans.